Here is a 317-residue protein sequence, read N- to C-terminus: Adenine deaminase (317 aa).

3 residues coordinate Zn(2+): His-14, His-16, and His-194. Glu-197 (proton donor) is an active-site residue. Asp-275 contributes to the Zn(2+) binding site. Position 276 (Asp-276) interacts with substrate.

It belongs to the metallo-dependent hydrolases superfamily. Adenosine and AMP deaminases family. Adenine deaminase type 2 subfamily. It depends on Zn(2+) as a cofactor.

It carries out the reaction adenine + H2O + H(+) = hypoxanthine + NH4(+). Functionally, catalyzes the hydrolytic deamination of adenine to hypoxanthine. Plays an important role in the purine salvage pathway and in nitrogen catabolism. This is Adenine deaminase from Pseudomonas syringae pv. tomato (strain ATCC BAA-871 / DC3000).